A 146-amino-acid polypeptide reads, in one-letter code: Transcription initiation factor TFIID subunit 10b (146 aa).

A disordered region spans residues 16–43; that stretch reads GASSHGQSSGGGGGGDRDRTTPSSHLSD.

This sequence belongs to the TAF10 family. In terms of assembly, belongs to the TFIID complex which is composed of TATA binding protein (Tbp) and a number of TBP-associated factors (TAFs). The N-terminus interacts with the histone fold of Taf8. In terms of tissue distribution, at embryonic stage 9, expression is seen in the mesodermal layer and midgut primordia. The mesoderm-specific expression persists in later stages of development and at its highest level is detected in midgut, hindgut, and differentiating somatic muscle fibers. Coexpressed with Taf10 in the lateral epidermis and anal plate.

It localises to the cytoplasm. The protein resides in the nucleus. Its function is as follows. TFIID is a multimeric protein complex that plays a central role in mediating promoter responses to various activators and repressors. This Drosophila melanogaster (Fruit fly) protein is Transcription initiation factor TFIID subunit 10b.